A 327-amino-acid polypeptide reads, in one-letter code: Endo-1,4-beta-xylanase A (327 aa).

One can recognise a GH10 domain in the interval 1 to 323 (AASGLEAAMK…KPSYTSTLNT (323 aa)). Cysteine 81 and cysteine 123 form a disulfide bridge. Asparagine 101 is a glycosylation site (N-linked (GlcNAc...) asparagine). Residue glutamate 131 is the Proton donor of the active site. Glutamate 245 serves as the catalytic Nucleophile. Residues cysteine 273 and cysteine 279 are joined by a disulfide bond.

It belongs to the glycosyl hydrolase 10 (cellulase F) family. In terms of assembly, monomer.

Its subcellular location is the secreted. The protein localises to the extracellular space. The enzyme catalyses Endohydrolysis of (1-&gt;4)-beta-D-xylosidic linkages in xylans.. The protein operates within glycan degradation; xylan degradation. Functionally, catalyzes the hydrolysis of the internal glycosidic bonds in heteroxylans, releasing mainly xylobiose and xylotriose. Most active on oat-spelt xylan. This Fusarium oxysporum f. sp. lycopersici (strain 4287 / CBS 123668 / FGSC 9935 / NRRL 34936) (Fusarium vascular wilt of tomato) protein is Endo-1,4-beta-xylanase A.